The sequence spans 379 residues: Chaperone protein DnaJ (379 aa).

A J domain is found at 5–69 (EFYDRLGVSK…QKRAAYDQYG (65 aa)). The segment at 135–217 (GAEKEVSYNR…CHGTGHEKKT (83 aa)) adopts a CR-type zinc-finger fold. Residues Cys-148, Cys-151, Cys-165, Cys-168, Cys-191, Cys-194, Cys-205, and Cys-208 each contribute to the Zn(2+) site. CXXCXGXG motif repeat units lie at residues 148–155 (CHTCSGSG), 165–172 (CQKCHGSG), 191–198 (CDVCQGSG), and 205–212 (CPTCHGTG).

This sequence belongs to the DnaJ family. In terms of assembly, homodimer. Zn(2+) is required as a cofactor.

It localises to the cytoplasm. In terms of biological role, participates actively in the response to hyperosmotic and heat shock by preventing the aggregation of stress-denatured proteins and by disaggregating proteins, also in an autonomous, DnaK-independent fashion. Unfolded proteins bind initially to DnaJ; upon interaction with the DnaJ-bound protein, DnaK hydrolyzes its bound ATP, resulting in the formation of a stable complex. GrpE releases ADP from DnaK; ATP binding to DnaK triggers the release of the substrate protein, thus completing the reaction cycle. Several rounds of ATP-dependent interactions between DnaJ, DnaK and GrpE are required for fully efficient folding. Also involved, together with DnaK and GrpE, in the DNA replication of plasmids through activation of initiation proteins. The polypeptide is Chaperone protein DnaJ (Streptococcus agalactiae serotype V (strain ATCC BAA-611 / 2603 V/R)).